Consider the following 338-residue polypeptide: Anthranilate phosphoribosyltransferase (338 aa).

5-phospho-alpha-D-ribose 1-diphosphate contacts are provided by residues glycine 80, 83-84 (GD), threonine 88, 90-93 (NIST), 108-116 (KHGNRSVSS), and serine 120. Glycine 80 lines the anthranilate pocket. Serine 92 is a Mg(2+) binding site. Asparagine 111 provides a ligand contact to anthranilate. Arginine 166 serves as a coordination point for anthranilate. Residues aspartate 225 and glutamate 226 each coordinate Mg(2+).

It belongs to the anthranilate phosphoribosyltransferase family. As to quaternary structure, homodimer. Mg(2+) is required as a cofactor.

It carries out the reaction N-(5-phospho-beta-D-ribosyl)anthranilate + diphosphate = 5-phospho-alpha-D-ribose 1-diphosphate + anthranilate. It functions in the pathway amino-acid biosynthesis; L-tryptophan biosynthesis; L-tryptophan from chorismate: step 2/5. Catalyzes the transfer of the phosphoribosyl group of 5-phosphorylribose-1-pyrophosphate (PRPP) to anthranilate to yield N-(5'-phosphoribosyl)-anthranilate (PRA). The polypeptide is Anthranilate phosphoribosyltransferase (Desulfatibacillum aliphaticivorans).